A 250-amino-acid chain; its full sequence is Cyclopentanol dehydrogenase (250 aa).

Met-18, Asp-37, Asp-63, Val-64, Asn-90, Tyr-155, Lys-159, Ile-188, Thr-190, and Thr-193 together coordinate NAD(+). Residue Tyr-155 is the Proton acceptor of the active site.

This sequence belongs to the short-chain dehydrogenases/reductases (SDR) family.

It carries out the reaction cyclopentanol + NAD(+) = cyclopentanone + NADH + H(+). The catalysed reaction is cyclohexanol + NAD(+) = cyclohexanone + NADH + H(+). Its pathway is alcohol metabolism; cyclopentanol degradation; 5-valerolactone from cyclopentanol: step 1/2. Its function is as follows. Catalyzes the oxidation of cyclopentanol to cyclopentanone and cyclohexanol to cyclohexanone. The activity toward cyclohexanol is 60% that of cyclopentanol. The polypeptide is Cyclopentanol dehydrogenase (Comamonas sp. (strain NCIMB 9872)).